The sequence spans 1419 residues: Formin-1 (1419 aa).

Positions 1 to 622 are microtubule-binding; the sequence is MEGTHCTLQL…TAEPQHQSPP (622 aa). Disordered regions lie at residues 138–194, 262–331, 343–641, and 685–711; these read DWQG…MGKD, LGRE…KVVA, VVKT…TPKD, and SLTE…DTEE. Positions 151–163 are enriched in basic residues; sequence RSTHGNKKPRRSS. Residues 298-317 are compositionally biased toward basic and acidic residues; it reads SHQDPEKHPEAEKDEMEKPA. Residues 394–411 show a composition bias toward polar residues; sequence RSSQSPAGETASISSVSA. Residues 425–438 show a composition bias toward basic and acidic residues; it reads IESEKLDEAPEGKR. Positions 456–842 are mediates interaction with alpha-catenin; the sequence is NKRRAGLPLG…LNISSLSQLS (387 aa). Over residues 504–517 the composition is skewed to polar residues; it reads FNNSASQSSTHKQT. Residues 520–529 show a composition bias toward pro residues; it reads VPSPLSPRLP. Polar residues predominate over residues 614–623; it reads AEPQHQSPPG. The segment covering 685-694 has biased composition (basic and acidic residues); sequence SLTEQDDRTP. A coiled-coil region spans residues 720 to 774; the sequence is AEYQAAILHLKREHKEEIENLQAQFELRAFHIRGEHAMITARLEETIENLKHELE. 2 disordered regions span residues 859–978 and 1390–1419; these read GMAS…AIEP and SEKK…VTTN. 2 stretches are compositionally biased toward pro residues: residues 868–882 and 890–958; these read LPPP…PPLP and PAPP…PPPG. In terms of domain architecture, FH1 spans 870–957; that stretch reads PPPASIPPPP…PPGLAPPPPP (88 aa). The FH2 domain maps to 972-1388; that stretch reads RKPAIEPSCP…KMAQESVSKL (417 aa).

The protein belongs to the formin homology family. Cappuccino subfamily. In terms of assembly, interacts with alpha-catenin and may interact with tubulin. Phosphorylated on serine and possibly threonine residues.

The protein resides in the nucleus. It localises to the cytoplasm. It is found in the cell junction. Its subcellular location is the adherens junction. The protein localises to the cell membrane. In terms of biological role, plays a role in the formation of adherens junction and the polymerization of linear actin cables. The protein is Formin-1 (FMN1) of Homo sapiens (Human).